Reading from the N-terminus, the 370-residue chain is tRNA-specific 2-thiouridylase MnmA (370 aa).

ATP-binding positions include 24–31 and leucine 50; that span reads AMSGGVDS. The active-site Nucleophile is cysteine 119. Residues cysteine 119 and cysteine 215 are joined by a disulfide bond. An ATP-binding site is contributed by glycine 143. Residues 165–167 form an interaction with tRNA region; it reads KDQ. Residue cysteine 215 is the Cysteine persulfide intermediate of the active site.

The protein belongs to the MnmA/TRMU family.

The protein resides in the cytoplasm. The catalysed reaction is S-sulfanyl-L-cysteinyl-[protein] + uridine(34) in tRNA + AH2 + ATP = 2-thiouridine(34) in tRNA + L-cysteinyl-[protein] + A + AMP + diphosphate + H(+). In terms of biological role, catalyzes the 2-thiolation of uridine at the wobble position (U34) of tRNA, leading to the formation of s(2)U34. This is tRNA-specific 2-thiouridylase MnmA from Wolbachia sp. subsp. Drosophila simulans (strain wRi).